A 339-amino-acid chain; its full sequence is Undecaprenyl-phosphate 4-deoxy-4-formamido-L-arabinose transferase (339 aa).

Helical transmembrane passes span 235–255 (LSLV…FLLV) and 269–289 (LFVL…GMGL).

The protein belongs to the glycosyltransferase 2 family.

It is found in the cell inner membrane. The enzyme catalyses UDP-4-deoxy-4-formamido-beta-L-arabinose + di-trans,octa-cis-undecaprenyl phosphate = 4-deoxy-4-formamido-alpha-L-arabinopyranosyl di-trans,octa-cis-undecaprenyl phosphate + UDP. It participates in glycolipid biosynthesis; 4-amino-4-deoxy-alpha-L-arabinose undecaprenyl phosphate biosynthesis; 4-amino-4-deoxy-alpha-L-arabinose undecaprenyl phosphate from UDP-4-deoxy-4-formamido-beta-L-arabinose and undecaprenyl phosphate: step 1/2. It functions in the pathway bacterial outer membrane biogenesis; lipopolysaccharide biosynthesis. In terms of biological role, catalyzes the transfer of 4-deoxy-4-formamido-L-arabinose from UDP to undecaprenyl phosphate. The modified arabinose is attached to lipid A and is required for resistance to polymyxin and cationic antimicrobial peptides. The polypeptide is Undecaprenyl-phosphate 4-deoxy-4-formamido-L-arabinose transferase (Pseudomonas paraeruginosa (strain DSM 24068 / PA7) (Pseudomonas aeruginosa (strain PA7))).